We begin with the raw amino-acid sequence, 223 residues long: Deoxyribose-phosphate aldolase (223 aa).

D89 serves as the catalytic Proton donor/acceptor. K154 serves as the catalytic Schiff-base intermediate with acetaldehyde. K183 serves as the catalytic Proton donor/acceptor.

The protein belongs to the DeoC/FbaB aldolase family. DeoC type 1 subfamily.

Its subcellular location is the cytoplasm. It catalyses the reaction 2-deoxy-D-ribose 5-phosphate = D-glyceraldehyde 3-phosphate + acetaldehyde. The protein operates within carbohydrate degradation; 2-deoxy-D-ribose 1-phosphate degradation; D-glyceraldehyde 3-phosphate and acetaldehyde from 2-deoxy-alpha-D-ribose 1-phosphate: step 2/2. Catalyzes a reversible aldol reaction between acetaldehyde and D-glyceraldehyde 3-phosphate to generate 2-deoxy-D-ribose 5-phosphate. The polypeptide is Deoxyribose-phosphate aldolase (Thermoanaerobacter sp. (strain X514)).